Reading from the N-terminus, the 252-residue chain is Hydroxyacylglutathione hydrolase (252 aa).

Residues His54, His56, Asp58, His59, His111, Asp130, and His170 each coordinate Zn(2+).

It belongs to the metallo-beta-lactamase superfamily. Glyoxalase II family. As to quaternary structure, monomer. The cofactor is Zn(2+).

The enzyme catalyses an S-(2-hydroxyacyl)glutathione + H2O = a 2-hydroxy carboxylate + glutathione + H(+). Its pathway is secondary metabolite metabolism; methylglyoxal degradation; (R)-lactate from methylglyoxal: step 2/2. Thiolesterase that catalyzes the hydrolysis of S-D-lactoyl-glutathione to form glutathione and D-lactic acid. The polypeptide is Hydroxyacylglutathione hydrolase (Francisella tularensis subsp. tularensis (strain FSC 198)).